Consider the following 558-residue polypeptide: Ribonuclease Y (558 aa).

The helical transmembrane segment at 3-23 (VLSILLILVAVGVGIFVGRQF) threads the bilayer. The KH domain maps to 248-311 (TTTTVELPSN…EIAKEALQRL (64 aa)). Residues 374–467 (VLLHSKEVAY…VCAADALSAA (94 aa)) form the HD domain.

This sequence belongs to the RNase Y family.

The protein resides in the cell membrane. In terms of biological role, endoribonuclease that initiates mRNA decay. The sequence is that of Ribonuclease Y from Aquifex aeolicus (strain VF5).